We begin with the raw amino-acid sequence, 981 residues long: Translation initiation factor IF-2 (981 aa).

A disordered region spans residues 31–370; the sequence is FVKSASSTVE…SKRAKRAEYE (340 aa). Over residues 64-87 the composition is skewed to low complexity; that stretch reads GAAAPAARPAAKPGAPSPSAAKPG. Residues 88 to 111 show a composition bias toward pro residues; it reads GPRPGPKPAAPAPAAPAAPAPAAP. The span at 112 to 121 shows a compositional bias: low complexity; that stretch reads AAPAAAAPAA. Residues 136-145 show a composition bias toward pro residues; the sequence is PAQPARPAPA. A compositionally biased stretch (low complexity) spans 146-165; the sequence is APAASAPAAPAAPAAPSTGA. A compositionally biased stretch (pro residues) spans 256–269; the sequence is RPSPGSMPPRPNPG. A compositionally biased stretch (low complexity) spans 270 to 279; it reads AMPARSARPA. Positions 280–339 are enriched in gly residues; sequence PGGGGRPGRPGGAPGGRPGGGGGGYRGGGAPGAGAGAGAPGGAAPAGGFRGRPGGGGRPG. Basic residues predominate over residues 356-365; that stretch reads RRGRKSKRAK. The region spanning 477-649 is the tr-type G domain; the sequence is SRPPVVTVMG…VLLTADASLD (173 aa). Residues 486 to 493 are G1; that stretch reads GHVDHGKT. Residue 486–493 participates in GTP binding; the sequence is GHVDHGKT. A G2 region spans residues 511–515; that stretch reads GITQH. A G3 region spans residues 536-539; sequence DTPG. Residues 536–540 and 590–593 each bind GTP; these read DTPGH and NKID. The interval 590–593 is G4; that stretch reads NKID. Residues 626–628 are G5; sequence SAK.

It belongs to the TRAFAC class translation factor GTPase superfamily. Classic translation factor GTPase family. IF-2 subfamily.

It localises to the cytoplasm. In terms of biological role, one of the essential components for the initiation of protein synthesis. Protects formylmethionyl-tRNA from spontaneous hydrolysis and promotes its binding to the 30S ribosomal subunits. Also involved in the hydrolysis of GTP during the formation of the 70S ribosomal complex. The protein is Translation initiation factor IF-2 of Rhodococcus erythropolis (strain PR4 / NBRC 100887).